The primary structure comprises 1008 residues: ATP-dependent DNA/RNA helicase DHX36 (1008 aa).

The interval 1–51 is required for recruitment to cytoplasmic stress granules; that stretch reads MSYDYHQNWGRDGGPRSSGGGYGGGPAGGHGGNRGSGGGGGGGGGGRGGRG. A disordered region spans residues 1–58; it reads MSYDYHQNWGRDGGPRSSGGGYGGGPAGGHGGNRGSGGGGGGGGGGRGGRGRHPGHLK. The required for the pre-miR-134 transport stretch occupies residues 1-104; sequence MSYDYHQNWG…IVQLLNSVQA (104 aa). The segment at 1-200 is necessary for nuclear and nucleolar caps localizations; it reads MSYDYHQNWG…KKNDLRYIEM (200 aa). Over residues 16 to 48 the composition is skewed to gly residues; that stretch reads RSSGGGYGGGPAGGHGGNRGSGGGGGGGGGGRG. Residues 53–75 form a DSM (DHX36-specific motif) region; the sequence is HPGHLKGREIGMWYAKKQGQKNK. The interval 53-105 is required for G4-DNA- and G4-RNA-binding; the sequence is HPGHLKGREIGMWYAKKQGQKNKEAERQERAVVHMDERREEQIVQLLNSVQAK. Positions 72 to 157 form a coiled coil; the sequence is QKNKEAERQE…INQEKKMFRI (86 aa). RecA-like domain stretches follow at residues 106–386 and 387–628; these read NDKE…MIHI and PGFT…DYQL. Residue serine 161 is modified to Phosphoserine. Residues 217–387 form the Helicase ATP-binding domain; sequence VNLIDNHQVT…FGNCPMIHIP (171 aa). 233–238 is an ATP binding site; the sequence is GCGKTT. The necessary for interaction with single-stranded DNA at the 3'-end of the G4-DNA structure stretch occupies residues 265-317; sequence RRISAISVAERVAAERAESCGSGNSTGYQIRLQSRLPRKQGSILYCTTGIILQ. Residues 334–337 carry the DEAH box motif; it reads DEIH. Mg(2+)-binding residues include glutamate 335 and histidine 337. Positions 477–647 constitute a Helicase C-terminal domain; that stretch reads ALIRYIVLEE…ELCLQIKILR (171 aa). Positions 498 to 557 are necessary for interaction with single-stranded DNA at the 3'-end of the G4-DNA structure; it reads WDNISTLHDLLMSQVMFKSDKFLIIPLHSLMPTVNQTQVFKRTPPGVRKIVIATNIAETS. A Nuclear localization signal motif is present at residues 517–528; sequence DKFLIIPLHSLM. ATP contacts are provided by residues serine 557 and 602-605; that span reads RAGR. Positions 629-698 are WH domain; sequence PEILRTPLEE…LGVHLARLPV (70 aa). Necessary for interaction with single-stranded DNA at the 3'-end of the G4-DNA structure regions lie at residues 638-697, 849-860, and 870-900; these read ELCL…ARLP, NLGKKRKMVKVY, and HPKS…IYLY. The OB-fold-like subdomains stretch occupies residues 841-905; that stretch reads PKVAKIRLNL…SIYLYDCTEV (65 aa). Lysine 947 carries the post-translational modification N6-acetyllysine. Serine 963 is modified (phosphoserine).

It belongs to the DEAD box helicase family. DEAH subfamily. As to quaternary structure, found in a multi-helicase-TICAM1 complex at least composed of DHX36, DDX1, DDX21 and TICAM1; this complex exists in resting cells with or without dsRNA poly(I:C) ligand stimulation. Interacts (via C-terminus) with TICAM1 (via TIR domain). Interacts (via C-terminus) with DDX21; this interaction serves as bridges to TICAM1. Interacts with TERT; this interaction is dependent on the ability of DHX36 to bind to the G-quadruplex RNA (G4-RNA) structure present in the telomerase RNA template component (TERC). Interacts with DKC1; this interaction is dependent on the ability of DHX36 to bind to the G4-RNA structure present in TERC. Interacts with PARN; this interaction stimulates PARN to enhance uPA mRNA decay. Interacts with EXOSC3; this interaction occurs in a RNase-insensitive manner. Interacts with EXOSC10; this interaction occurs in a RNase-insensitive manner. Interacts with ILF3; this interaction occurs in a RNA-dependent manner. Interacts with ELAVL1; this interaction occurs in an RNA-dependent manner. Interacts with DDX5; this interaction occurs in a RNA-dependent manner. Interacts with DDX17; this interaction occurs in a RNA-dependent manner. Interacts with HDAC1; this interaction occurs in a RNA-dependent manner. Interacts with HDAC3; this interaction occurs in a RNA-dependent manner. Interacts with HDAC4. Interacts with AGO1. Interacts with AGO2. Interacts with ERCC6. Mg(2+) is required as a cofactor. In terms of tissue distribution, highly expressed in testis.

It is found in the nucleus. Its subcellular location is the cytoplasm. It localises to the cytosol. The protein localises to the stress granule. The protein resides in the nucleus speckle. It is found in the chromosome. Its subcellular location is the telomere. It localises to the mitochondrion. The protein localises to the perikaryon. The protein resides in the cell projection. It is found in the dendrite. Its subcellular location is the axon. It catalyses the reaction ATP + H2O = ADP + phosphate + H(+). With respect to regulation, ATPase activity is enhanced in the presence of homomeric poly(U) RNAs, but not by double-stranded DNA (dsDNA), double-stranded RNA (dsRNA) and tRNA. In terms of biological role, multifunctional ATP-dependent helicase that unwinds G-quadruplex (G4) structures. Plays a role in many biological processes such as genomic integrity, gene expression regulations and as a sensor to initiate antiviral responses. G4 structures correspond to helical structures containing guanine tetrads. Binds with high affinity to and unwinds G4 structures that are formed in nucleic acids (G4-DNA and G4-RNA). Plays a role in genomic integrity. Converts the G4-RNA structure present in telomerase RNA template component (TREC) into a double-stranded RNA to promote P1 helix formation that acts as a template boundary ensuring accurate reverse transcription. Plays a role in transcriptional regulation. Resolves G4-DNA structures in promoters of genes, such as YY1, KIT/c-kit and ALPL and positively regulates their expression. Plays a role in post-transcriptional regulation. Unwinds a G4-RNA structure located in the 3'-UTR polyadenylation site of the pre-mRNA TP53 and stimulates TP53 pre-mRNA 3'-end processing in response to ultraviolet (UV)-induced DNA damage. Binds to the precursor-microRNA-134 (pre-miR-134) terminal loop and regulates its transport into the synapto-dendritic compartment. Involved in the pre-miR-134-dependent inhibition of target gene expression and the control of dendritic spine size. Plays a role in the regulation of cytoplasmic mRNA translation and mRNA stability. Binds to both G4-RNA structures and alternative non-quadruplex-forming sequence within the 3'-UTR of the PITX1 mRNA regulating negatively PITX1 protein expression. Binds to both G4-RNA structure in the 5'-UTR and AU-rich elements (AREs) localized in the 3'-UTR of NKX2-5 mRNA to either stimulate protein translation or induce mRNA decay in an ELAVL1-dependent manner, respectively. Also binds to ARE sequences present in several mRNAs mediating exosome-mediated 3'-5' mRNA degradation. Involved in cytoplasmic urokinase-type plasminogen activator (uPA) mRNA decay. Component of a multi-helicase-TICAM1 complex that acts as a cytoplasmic sensor of viral double-stranded RNA (dsRNA) and plays a role in the activation of a cascade of antiviral responses including the induction of pro-inflammatory cytokines via the adapter molecule TICAM1. Required for early embryonic development and hematopoiesis. Involved in the regulation of cardioblast differentiation and proliferation during heart development. Involved in spermatogonia differentiation. May play a role in ossification. The polypeptide is ATP-dependent DNA/RNA helicase DHX36 (Homo sapiens (Human)).